The chain runs to 181 residues: UPF0177 protein YbdI (181 aa).

5 helical membrane-spanning segments follow: residues 10–30 (ILFL…GVFA), 41–61 (LLWL…AHYL), 81–101 (FVDS…IAPI), 114–134 (FFSH…LIHT), and 161–181 (SDSI…HIII).

Belongs to the UPF0177 family.

The protein resides in the cell membrane. This is UPF0177 protein YbdI (ybdI) from Lactococcus lactis subsp. lactis (strain IL1403) (Streptococcus lactis).